Consider the following 243-residue polypeptide: Ubiquinone biosynthesis O-methyltransferase (243 aa).

The S-adenosyl-L-methionine site is built by R44, G64, D85, and M129.

It belongs to the methyltransferase superfamily. UbiG/COQ3 family.

The catalysed reaction is a 3-demethylubiquinol + S-adenosyl-L-methionine = a ubiquinol + S-adenosyl-L-homocysteine + H(+). It catalyses the reaction a 3-(all-trans-polyprenyl)benzene-1,2-diol + S-adenosyl-L-methionine = a 2-methoxy-6-(all-trans-polyprenyl)phenol + S-adenosyl-L-homocysteine + H(+). It functions in the pathway cofactor biosynthesis; ubiquinone biosynthesis. In terms of biological role, O-methyltransferase that catalyzes the 2 O-methylation steps in the ubiquinone biosynthetic pathway. This is Ubiquinone biosynthesis O-methyltransferase from Erwinia tasmaniensis (strain DSM 17950 / CFBP 7177 / CIP 109463 / NCPPB 4357 / Et1/99).